The following is a 133-amino-acid chain: NAD(P)H-quinone oxidoreductase subunit 3 (133 aa).

3 consecutive transmembrane segments (helical) span residues 22 to 44 (YLLG…SRLL), 77 to 97 (MFAL…PWAV), and 102 to 122 (LGLL…VGLA).

Belongs to the complex I subunit 3 family. NDH-1 can be composed of about 15 different subunits; different subcomplexes with different compositions have been identified which probably have different functions.

It localises to the cellular thylakoid membrane. It catalyses the reaction a plastoquinone + NADH + (n+1) H(+)(in) = a plastoquinol + NAD(+) + n H(+)(out). The enzyme catalyses a plastoquinone + NADPH + (n+1) H(+)(in) = a plastoquinol + NADP(+) + n H(+)(out). Functionally, NDH-1 shuttles electrons from an unknown electron donor, via FMN and iron-sulfur (Fe-S) centers, to quinones in the respiratory and/or the photosynthetic chain. The immediate electron acceptor for the enzyme in this species is believed to be plastoquinone. Couples the redox reaction to proton translocation, and thus conserves the redox energy in a proton gradient. Cyanobacterial NDH-1 also plays a role in inorganic carbon-concentration. The sequence is that of NAD(P)H-quinone oxidoreductase subunit 3 from Synechococcus sp. (strain ATCC 27144 / PCC 6301 / SAUG 1402/1) (Anacystis nidulans).